We begin with the raw amino-acid sequence, 139 residues long: Cystatin (139 aa).

A signal peptide spans Met-1–Gly-23. The Secondary area of contact signature appears at Gln-76–Gly-80. Intrachain disulfides connect Cys-94–Cys-104 and Cys-118–Cys-138. Ser-103 is modified (phosphoserine).

The protein belongs to the cystatin family.

Its subcellular location is the secreted. In terms of biological role, this protein binds tightly to and inhibits a variety of thiol proteases including ficin, papain, and cathepsins B, C, H, and L. Although isolated from egg white, it is also present in serum. This is Cystatin from Gallus gallus (Chicken).